Consider the following 153-residue polypeptide: UPF0260 protein YcgN (153 aa).

This sequence belongs to the UPF0260 family.

The protein is UPF0260 protein YcgN of Shigella boydii serotype 18 (strain CDC 3083-94 / BS512).